Consider the following 280-residue polypeptide: Pyrethroid hydrolase (280 aa).

Catalysis depends on charge relay system residues D202 and H230. The interval 254-280 (YRQTATKAGPDRPAGADGGRADRADLP) is disordered.

It belongs to the AB hydrolase superfamily. As to quaternary structure, monomer.

It catalyses the reaction (-)-trans-permethrin + H2O = (3-phenoxyphenyl)methanol + (1S,3R)-3-(2,2-dichlorovinyl)-2,2-dimethylcyclopropanecarboxylate + H(+). Catalyzes the hydrolysis of pyrethroids pesticides. Catalyzes the hydrolysis of cypermethrin to equimolar amounts of cyano-3-phenoxybenzyl alcohol and 2,2-dimethyl-3-(2,2-dichlorovinyl)-cyclopropanecarboxylic acid. Hydrolyzes cis-permethrin at approximately equal rate to trans-permethrin. This is Pyrethroid hydrolase (pytH) from Sphingobium wenxiniae (strain DSM 21828 / CGMCC 1.7748 / JZ-1).